We begin with the raw amino-acid sequence, 141 residues long: Lutropin subunit beta (141 aa).

The first 20 residues, 1-20 (MEMLQGLLLWLLLSVAGVWA), serve as a signal peptide directing secretion. Blocked amino end (Ser) is present on Ser21. Cystine bridges form between Cys29/Cys77, Cys43/Cys92, Cys46/Cys130, Cys54/Cys108, Cys58/Cys110, and Cys113/Cys120. The N-linked (GlcNAc...) asparagine glycan is linked to Asn33.

It belongs to the glycoprotein hormones subunit beta family. As to quaternary structure, heterodimer of a common alpha chain and a unique beta chain which confers biological specificity to thyrotropin, lutropin, follitropin and gonadotropin.

Its subcellular location is the secreted. Its function is as follows. Promotes spermatogenesis and ovulation by stimulating the testes and ovaries to synthesize steroids. The polypeptide is Lutropin subunit beta (LHB) (Sus scrofa (Pig)).